The chain runs to 107 residues: MMKVLVVVALLVTLISYSSSEGIDDLEADELLSLMANEQTRKECIPKHHECTSNKHGCCRGNFFKYKCQCTTVVTQDGEQTERCFCGTPPHREAAELVVGFGKKIFG.

A signal peptide spans 1–20; sequence MMKVLVVVALLVTLISYSSS. Positions 21–41 are excised as a propeptide; that stretch reads EGIDDLEADELLSLMANEQTR. Disulfide bonds link Cys-44–Cys-59, Cys-51–Cys-68, Cys-58–Cys-86, and Cys-70–Cys-84.

Belongs to the neurotoxin 19 (CSTX) family. 04 (U1-Lctx) subfamily. As to expression, expressed by the venom gland.

It localises to the secreted. The polypeptide is U1-lycotoxin-Ls1o (Lycosa singoriensis (Wolf spider)).